We begin with the raw amino-acid sequence, 145 residues long: 3-hydroxyacyl-[acyl-carrier-protein] dehydratase FabZ (145 aa).

The active site involves His47.

It belongs to the thioester dehydratase family. FabZ subfamily.

The protein resides in the cytoplasm. It catalyses the reaction a (3R)-hydroxyacyl-[ACP] = a (2E)-enoyl-[ACP] + H2O. Functionally, involved in unsaturated fatty acids biosynthesis. Catalyzes the dehydration of short chain beta-hydroxyacyl-ACPs and long chain saturated and unsaturated beta-hydroxyacyl-ACPs. This Aromatoleum aromaticum (strain DSM 19018 / LMG 30748 / EbN1) (Azoarcus sp. (strain EbN1)) protein is 3-hydroxyacyl-[acyl-carrier-protein] dehydratase FabZ.